The sequence spans 358 residues: Methylthioribose-1-phosphate isomerase (358 aa).

Substrate is bound by residues 54–56 (CGA) and Gln205. Asp246 (proton donor) is an active-site residue. 256–257 (NQ) contacts substrate.

The protein belongs to the eIF-2B alpha/beta/delta subunits family. MtnA subfamily.

The enzyme catalyses 5-(methylsulfanyl)-alpha-D-ribose 1-phosphate = 5-(methylsulfanyl)-D-ribulose 1-phosphate. The protein operates within amino-acid biosynthesis; L-methionine biosynthesis via salvage pathway; L-methionine from S-methyl-5-thio-alpha-D-ribose 1-phosphate: step 1/6. Functionally, catalyzes the interconversion of methylthioribose-1-phosphate (MTR-1-P) into methylthioribulose-1-phosphate (MTRu-1-P). The polypeptide is Methylthioribose-1-phosphate isomerase (Pseudomonas fluorescens (strain ATCC BAA-477 / NRRL B-23932 / Pf-5)).